Here is a 226-residue protein sequence, read N- to C-terminus: MDERLFTFAGLINPNHDFIIGFHTLLVAVILLILARYATHKMQVVPSGIQNVFEFIISGIISFAKDIVGEQVARKYFPLAATIAFLVFFGNAIGIIPGFEAPTSSWSFTLVLALVVFFYYHFEGIRAQGVLKYFKHFMGPVWWLAPLMFPVEIISHFSRIISLSFRLFGNIKGDDMFLLVMLMLAPWIVPVAPFAILTFMALLQAFVFMILTYVYIHGAVVVDEEH.

7 helical membrane-spanning segments follow: residues 18–38 (FIIG…ARYA), 44–64 (VVPS…ISFA), 79–99 (LAAT…IPGF), 105–125 (SWSF…FEGI), 137–157 (FMGP…ISHF), 177–197 (FLLV…FAIL), and 202–222 (LLQA…AVVV).

It belongs to the ATPase A chain family. F-type ATPases have 2 components, CF(1) - the catalytic core - and CF(0) - the membrane proton channel. CF(1) has five subunits: alpha(3), beta(3), gamma(1), delta(1), epsilon(1). CF(0) has three main subunits: a(1), b(2) and c(9-12). The alpha and beta chains form an alternating ring which encloses part of the gamma chain. CF(1) is attached to CF(0) by a central stalk formed by the gamma and epsilon chains, while a peripheral stalk is formed by the delta and b chains.

Its subcellular location is the cell inner membrane. Key component of the proton channel; it plays a direct role in the translocation of protons across the membrane. The chain is ATP synthase subunit a from Helicobacter hepaticus (strain ATCC 51449 / 3B1).